We begin with the raw amino-acid sequence, 153 residues long: MNRILINKELGDRSITKKFVKEAVEKILEHLNIDNVEISITLTDDSTIKEINRQWRGKDKPTDVLSFPIDEKPPKYRYRILGDVVISLPYAKKQAEEIGLPYREEIIRLLIHGILHLLGYDHERSEKEAQVMFSLQDEIFENIRSYFSRTTQT.

Residues His-112, His-116, and His-122 each contribute to the Zn(2+) site.

The protein belongs to the endoribonuclease YbeY family. The cofactor is Zn(2+).

It is found in the cytoplasm. In terms of biological role, single strand-specific metallo-endoribonuclease involved in late-stage 70S ribosome quality control and in maturation of the 3' terminus of the 16S rRNA. This is Endoribonuclease YbeY from Persephonella marina (strain DSM 14350 / EX-H1).